The sequence spans 328 residues: GMP reductase (328 aa).

Catalysis depends on C176, which acts as the Thioimidate intermediate. 205 to 228 contributes to the NADP(+) binding site; it reads IIADGGIRTHGDIAKSIRFGASMV.

Belongs to the IMPDH/GMPR family. GuaC type 2 subfamily.

The enzyme catalyses IMP + NH4(+) + NADP(+) = GMP + NADPH + 2 H(+). In terms of biological role, catalyzes the irreversible NADPH-dependent deamination of GMP to IMP. It functions in the conversion of nucleobase, nucleoside and nucleotide derivatives of G to A nucleotides, and in maintaining the intracellular balance of A and G nucleotides. The sequence is that of GMP reductase from Streptococcus pneumoniae (strain Hungary19A-6).